The primary structure comprises 410 residues: Arginine deiminase (410 aa).

C400 (amidino-cysteine intermediate) is an active-site residue.

Belongs to the arginine deiminase family.

The protein localises to the cytoplasm. The catalysed reaction is L-arginine + H2O = L-citrulline + NH4(+). It participates in amino-acid degradation; L-arginine degradation via ADI pathway; carbamoyl phosphate from L-arginine: step 1/2. This Lactococcus lactis subsp. cremoris (strain MG1363) protein is Arginine deiminase.